We begin with the raw amino-acid sequence, 159 residues long: Large ribosomal subunit protein bL35c (159 aa).

A chloroplast-targeting transit peptide spans 1 to 86; it reads MAMASATATL…TSSPSFTVFA (86 aa).

In terms of assembly, component of the chloroplast large ribosomal subunit (LSU). Mature 70S chloroplast ribosomes of higher plants consist of a small (30S) and a large (50S) subunit. The 30S small subunit contains 1 molecule of ribosomal RNA (16S rRNA) and 24 different proteins. The 50S large subunit contains 3 rRNA molecules (23S, 5S and 4.5S rRNA) and 33 different proteins.

It localises to the plastid. It is found in the chloroplast. Its function is as follows. Component of the chloroplast ribosome (chloro-ribosome), a dedicated translation machinery responsible for the synthesis of chloroplast genome-encoded proteins, including proteins of the transcription and translation machinery and components of the photosynthetic apparatus. The sequence is that of Large ribosomal subunit protein bL35c (RPL35) from Spinacia oleracea (Spinach).